The following is a 336-amino-acid chain: Fimbrial adhesin PapGII (336 aa).

The N-terminal stretch at 1 to 20 (MKKWFPALLFSLCVSGESSA) is a signal peptide. 2 disulfides stabilise this stretch: C64–C138 and C217–C249. Residues E79 and 124–127 (GYKW) contribute to the D-galactose site.

Belongs to the adhesin PapG family.

The protein resides in the secreted. The protein localises to the fimbrium. In terms of biological role, tip adhesin component of type P pili that plays a critical role in kidney infection through targeted interaction with the globoseries glycolipids containing the Gal-alpha(1-4)-Gal disaccharide present on uroepithelial cells. In turn, transcriptionally regulates host gene expression in kidney cells, leading to inflammatory pathway activation and renal tissue damage. Acts thereby as key determinant of invasive uropathogenic E.coli (UPEC), which cause pyelonephritis and urinary-source bacteremia. This Escherichia coli O6:H1 (strain CFT073 / ATCC 700928 / UPEC) protein is Fimbrial adhesin PapGII.